We begin with the raw amino-acid sequence, 249 residues long: Ubiquinone biosynthesis O-methyltransferase (249 aa).

Positions 1 to 21 (MIPEVSNEASQPAAHRQENVD) are disordered. Residues arginine 52, glycine 72, aspartate 93, and methionine 137 each contribute to the S-adenosyl-L-methionine site.

Belongs to the methyltransferase superfamily. UbiG/COQ3 family.

It catalyses the reaction a 3-demethylubiquinol + S-adenosyl-L-methionine = a ubiquinol + S-adenosyl-L-homocysteine + H(+). The catalysed reaction is a 3-(all-trans-polyprenyl)benzene-1,2-diol + S-adenosyl-L-methionine = a 2-methoxy-6-(all-trans-polyprenyl)phenol + S-adenosyl-L-homocysteine + H(+). It functions in the pathway cofactor biosynthesis; ubiquinone biosynthesis. In terms of biological role, O-methyltransferase that catalyzes the 2 O-methylation steps in the ubiquinone biosynthetic pathway. This chain is Ubiquinone biosynthesis O-methyltransferase, found in Sodalis glossinidius (strain morsitans).